Here is an 834-residue protein sequence, read N- to C-terminus: Periplasmic nitrate reductase (834 aa).

Positions 1 to 29 form a signal peptide, tat-type signal; it reads MNLTRREFAKANAAAIAAAAAGLPILVRA. The region spanning 41-97 is the 4Fe-4S Mo/W bis-MGD-type domain; sequence LDWNKAPCRFCGTGCSVMVATRDGQVVATHGDIKAEVNRGINCVKGYFLSKIMYGSD. 4 residues coordinate [4Fe-4S] cluster: cysteine 48, cysteine 51, cysteine 55, and cysteine 83. Residues lysine 85, glutamine 152, asparagine 177, cysteine 181, 214–221, 245–249, 264–266, methionine 375, glutamine 379, asparagine 485, 511–512, lysine 534, aspartate 561, and 721–730 contribute to the Mo-bis(molybdopterin guanine dinucleotide) site; these read WGSNMAEM, STFEH, QTD, SD, and TGRVLEHWHT. Substrate is bound at residue phenylalanine 797. Mo-bis(molybdopterin guanine dinucleotide) is bound by residues asparagine 805 and lysine 822.

This sequence belongs to the prokaryotic molybdopterin-containing oxidoreductase family. NasA/NapA/NarB subfamily. Component of the periplasmic nitrate reductase NapAB complex composed of NapA and NapB. The cofactor is [4Fe-4S] cluster. Requires Mo-bis(molybdopterin guanine dinucleotide) as cofactor. Post-translationally, predicted to be exported by the Tat system. The position of the signal peptide cleavage has not been experimentally proven.

It is found in the periplasm. It catalyses the reaction 2 Fe(II)-[cytochrome] + nitrate + 2 H(+) = 2 Fe(III)-[cytochrome] + nitrite + H2O. Functionally, catalytic subunit of the periplasmic nitrate reductase complex NapAB. Receives electrons from NapB and catalyzes the reduction of nitrate to nitrite. This chain is Periplasmic nitrate reductase, found in Pseudomonas paraeruginosa (strain DSM 24068 / PA7) (Pseudomonas aeruginosa (strain PA7)).